The following is a 550-amino-acid chain: Chaperonin GroEL (550 aa).

ATP is bound by residues 30-33 (TLGP), lysine 51, 87-91 (DGTTT), glycine 415, 480-482 (NAA), and aspartate 496.

The protein belongs to the chaperonin (HSP60) family. Forms a cylinder of 14 subunits composed of two heptameric rings stacked back-to-back. Interacts with the co-chaperonin GroES.

It is found in the cytoplasm. It catalyses the reaction ATP + H2O + a folded polypeptide = ADP + phosphate + an unfolded polypeptide.. Its function is as follows. Together with its co-chaperonin GroES, plays an essential role in assisting protein folding. The GroEL-GroES system forms a nano-cage that allows encapsulation of the non-native substrate proteins and provides a physical environment optimized to promote and accelerate protein folding. This is Chaperonin GroEL from Variovorax paradoxus (strain S110).